A 116-amino-acid polypeptide reads, in one-letter code: NADH-ubiquinone oxidoreductase chain 3 (116 aa).

3 consecutive transmembrane segments (helical) span residues 4–24 (LIITLITNSLLSTIIIIIAFW), 56–76 (FFLVAITFLLFDLEIALLLPL), and 88–108 (TLILSYCLIMLLTVGLAYEWI).

It belongs to the complex I subunit 3 family. As to quaternary structure, core subunit of respiratory chain NADH dehydrogenase (Complex I) which is composed of 45 different subunits. Interacts with TMEM186. Interacts with TMEM242.

The protein resides in the mitochondrion inner membrane. It catalyses the reaction a ubiquinone + NADH + 5 H(+)(in) = a ubiquinol + NAD(+) + 4 H(+)(out). In terms of biological role, core subunit of the mitochondrial membrane respiratory chain NADH dehydrogenase (Complex I) which catalyzes electron transfer from NADH through the respiratory chain, using ubiquinone as an electron acceptor. Essential for the catalytic activity of complex I. The polypeptide is NADH-ubiquinone oxidoreductase chain 3 (Didelphis virginiana (North American opossum)).